The following is a 67-amino-acid chain: Histone H2A (67 aa).

The residue at position 60 (Gln-60) is an N5-methylglutamine.

It belongs to the histone H2A family. The nucleosome is a histone octamer containing two molecules each of H2A, H2B, H3 and H4 assembled in one H3-H4 heterotetramer and two H2A-H2B heterodimers. The octamer wraps approximately 147 bp of DNA.

It localises to the nucleus. Its subcellular location is the chromosome. Core component of nucleosome. Nucleosomes wrap and compact DNA into chromatin, limiting DNA accessibility to the cellular machineries which require DNA as a template. Histones thereby play a central role in transcription regulation, DNA repair, DNA replication and chromosomal stability. DNA accessibility is regulated via a complex set of post-translational modifications of histones, also called histone code, and nucleosome remodeling. The protein is Histone H2A of Olisthodiscus luteus (Marine phytoflagellate).